The following is a 428-amino-acid chain: Gamma-glutamyl phosphate reductase (428 aa).

This sequence belongs to the gamma-glutamyl phosphate reductase family.

The protein localises to the cytoplasm. It catalyses the reaction L-glutamate 5-semialdehyde + phosphate + NADP(+) = L-glutamyl 5-phosphate + NADPH + H(+). Its pathway is amino-acid biosynthesis; L-proline biosynthesis; L-glutamate 5-semialdehyde from L-glutamate: step 2/2. Catalyzes the NADPH-dependent reduction of L-glutamate 5-phosphate into L-glutamate 5-semialdehyde and phosphate. The product spontaneously undergoes cyclization to form 1-pyrroline-5-carboxylate. This is Gamma-glutamyl phosphate reductase from Zymomonas mobilis subsp. mobilis (strain ATCC 31821 / ZM4 / CP4).